The following is a 314-amino-acid chain: Triosephosphate isomerase, chloroplastic (314 aa).

The segment covering 1-22 has biased composition (polar residues); that stretch reads MAVASTSLASQLSGPKSLSQPY. The segment at 1 to 25 is disordered; sequence MAVASTSLASQLSGPKSLSQPYSGL. The transit peptide at 1-59 directs the protein to the chloroplast; that stretch reads MAVASTSLASQLSGPKSLSQPYSGLRRSCPKLDQSHSSLFQHLSLSSSSRKASRAVVAM. Positions 70 and 72 each coordinate substrate. Histidine 154 acts as the Electrophile in catalysis. Catalysis depends on glutamate 224, which acts as the Proton acceptor.

The protein belongs to the triosephosphate isomerase family. In terms of assembly, homodimer.

It is found in the plastid. Its subcellular location is the chloroplast. It carries out the reaction D-glyceraldehyde 3-phosphate = dihydroxyacetone phosphate. It participates in carbohydrate biosynthesis; Calvin cycle. In Fragaria ananassa (Strawberry), this protein is Triosephosphate isomerase, chloroplastic (TPI).